We begin with the raw amino-acid sequence, 61 residues long: Large ribosomal subunit protein eL24 (61 aa).

Zn(2+) is bound by residues C7, C10, C33, and C37. A C4-type zinc finger spans residues 7–37 (CTYCGRSIEPGTGLMYVKNDGSVLWFCSSKC).

The protein belongs to the eukaryotic ribosomal protein eL24 family. In terms of assembly, part of the 50S ribosomal subunit. Forms a cluster with proteins L3 and L14. Zn(2+) is required as a cofactor.

In terms of biological role, binds to the 23S rRNA. The chain is Large ribosomal subunit protein eL24 from Hyperthermus butylicus (strain DSM 5456 / JCM 9403 / PLM1-5).